We begin with the raw amino-acid sequence, 170 residues long: Adenine phosphoribosyltransferase (170 aa).

It belongs to the purine/pyrimidine phosphoribosyltransferase family. Homodimer.

The protein resides in the cytoplasm. It catalyses the reaction AMP + diphosphate = 5-phospho-alpha-D-ribose 1-diphosphate + adenine. Its pathway is purine metabolism; AMP biosynthesis via salvage pathway; AMP from adenine: step 1/1. Functionally, catalyzes a salvage reaction resulting in the formation of AMP, that is energically less costly than de novo synthesis. The chain is Adenine phosphoribosyltransferase from Streptococcus pneumoniae (strain Hungary19A-6).